A 429-amino-acid polypeptide reads, in one-letter code: tRNA(Ile2) 2-agmatinylcytidine synthetase TiaS (429 aa).

Residues 271–343 (VRGKVIKKYW…LTLNLEKFYP (73 aa)) constitute a DNA-binding region (OB).

The protein belongs to the TiaS family.

It is found in the cytoplasm. It carries out the reaction cytidine(34) in tRNA(Ile2) + agmatine + ATP + H2O = 2-agmatinylcytidine(34) in tRNA(Ile2) + AMP + 2 phosphate + 2 H(+). Functionally, ATP-dependent agmatine transferase that catalyzes the formation of 2-agmatinylcytidine (agm2C) at the wobble position (C34) of tRNA(Ile2), converting the codon specificity from AUG to AUA. In Thermococcus sibiricus (strain DSM 12597 / MM 739), this protein is tRNA(Ile2) 2-agmatinylcytidine synthetase TiaS.